The chain runs to 302 residues: Glycine--tRNA ligase alpha subunit (302 aa).

The protein belongs to the class-II aminoacyl-tRNA synthetase family. In terms of assembly, tetramer of two alpha and two beta subunits.

Its subcellular location is the cytoplasm. It catalyses the reaction tRNA(Gly) + glycine + ATP = glycyl-tRNA(Gly) + AMP + diphosphate. In Xanthomonas oryzae pv. oryzae (strain PXO99A), this protein is Glycine--tRNA ligase alpha subunit.